Reading from the N-terminus, the 201-residue chain is dCTP deaminase, dUMP-forming (201 aa).

DCTP contacts are provided by residues 117–122, Asp135, 143–145, Gln163, Tyr177, and Gln188; these read RSSFGR and TLE. Glu145 functions as the Proton donor/acceptor in the catalytic mechanism.

Belongs to the dCTP deaminase family. As to quaternary structure, homotrimer.

The enzyme catalyses dCTP + 2 H2O = dUMP + NH4(+) + diphosphate. It participates in pyrimidine metabolism; dUMP biosynthesis; dUMP from dCTP: step 1/1. Its function is as follows. Bifunctional enzyme that catalyzes both the deamination of dCTP to dUTP and the hydrolysis of dUTP to dUMP without releasing the toxic dUTP intermediate. The polypeptide is dCTP deaminase, dUMP-forming (Methanococcus aeolicus (strain ATCC BAA-1280 / DSM 17508 / OCM 812 / Nankai-3)).